The primary structure comprises 221 residues: Thymidylate kinase (221 aa).

11-18 (GPDGAGKT) is a binding site for ATP.

This sequence belongs to the thymidylate kinase family.

The enzyme catalyses dTMP + ATP = dTDP + ADP. Its function is as follows. Phosphorylation of dTMP to form dTDP in both de novo and salvage pathways of dTTP synthesis. In Lactiplantibacillus plantarum (strain ATCC BAA-793 / NCIMB 8826 / WCFS1) (Lactobacillus plantarum), this protein is Thymidylate kinase.